Here is a 154-residue protein sequence, read N- to C-terminus: Photosystem II extrinsic protein U, chloroplastic (154 aa).

Residues M1 to S36 constitute a chloroplast transit peptide. The N-terminal 25 residues, R37–A61, are a transit peptide targeting the thylakoid.

Belongs to the PsbU family. As to quaternary structure, PSII is composed of 1 copy each of membrane proteins PsbA, PsbB, PsbC, PsbD, PsbE, PsbF, PsbH, PsbI, PsbJ, PsbK, PsbL, PsbM, PsbT, PsbY, PsbZ, Psb30/Ycf12, at least 3 peripheral proteins of the oxygen-evolving complex and a large number of cofactors. It forms dimeric complexes. The extrinsic subunits in red algae are PsbO (OEC33), PsbQ', cytochrome c-550 and PsbU. Predicted to be translocated into the thylakoid lumen by the Tat system. The position of the first transit peptide cleavage has not been experimentally proven.

It localises to the plastid. The protein localises to the chloroplast thylakoid membrane. In terms of biological role, one of the extrinsic, lumenal subunits of photosystem II (PSII). PSII is a light-driven water plastoquinone oxidoreductase, using light energy to abstract electrons from H(2)O, generating a proton gradient subsequently used for ATP formation. The extrinsic proteins stabilize the structure of photosystem II oxygen-evolving complex (OEC), the ion environment of oxygen evolution and protect the OEC against heat-induced inactivation. The protein is Photosystem II extrinsic protein U, chloroplastic of Cyanidium caldarium (Red alga).